Here is a 1270-residue protein sequence, read N- to C-terminus: Activating transcription factor 7-interacting protein 1 (1270 aa).

Methionine 1 carries the post-translational modification N-acetylmethionine. A Glycyl lysine isopeptide (Lys-Gly) (interchain with G-Cter in SUMO2) cross-link involves residue lysine 33. 2 positions are modified to phosphoserine: serine 57 and serine 113. 2 disordered regions span residues 104–223 (DDDL…ISGD) and 235–402 (TSVD…EDET). The residue at position 118 (threonine 118) is a Phosphothreonine. Low complexity-rich tracts occupy residues 132–203 (GDPA…SSGD) and 248–269 (DPAS…SDDL). Basic and acidic residues-rich tracts occupy residues 310 to 327 (SNKD…EKLE) and 333 to 343 (DSLDEKNKADN). Acidic residues predominate over residues 347–356 (ANEETLETDD). Positions 363–373 (RPPENEKKVEE) are enriched in basic and acidic residues. Serine 445, serine 473, serine 474, serine 477, serine 479, and serine 496 each carry phosphoserine. 4 disordered regions span residues 455-570 (TSLL…SKRR), 658-685 (EDLK…NSNN), 822-862 (PPTV…PTAS), and 886-906 (RTSL…NRGP). The span at 474–486 (SFGSPSKQESSES) shows a compositional bias: polar residues. Acidic residues predominate over residues 496–509 (SDEEDISGEKDESE). Basic and acidic residues predominate over residues 524-552 (SNEKDNKPEEEEQVIHEDDERPSEKNEFS). The Nuclear localization signal motif lies at 553 to 571 (RRKRSKSEDMDNVQSKRRR). A Glycyl lysine isopeptide (Lys-Gly) (interchain with G-Cter in SUMO2) cross-link involves residue lysine 558. Serine 559 carries the post-translational modification Phosphoserine. An interaction with SETDB1 region spans residues 562–817 (MDNVQSKRRR…NQPSGNVEFI (256 aa)). A coiled-coil region spans residues 617 to 665 (KTLAELKTRVEKIECNKRHKTVLTELQAKIARLTKRFEAAKEDLKKRHE). Serine 673 bears the Phosphoserine mark. Residues 822–834 (PPTVSGLTKNPVS) show a composition bias toward polar residues. Residues 843-854 (KPNNVPSVPSPS) show a composition bias toward low complexity. Serine 899 is modified (phosphoserine). Residues lysine 910 and lysine 938 each participate in a glycyl lysine isopeptide (Lys-Gly) (interchain with G-Cter in SUMO2) cross-link. Composition is skewed to polar residues over residues 918–942 (TSSA…TIDA) and 950–964 (DSTS…SDSS). Disordered stretches follow at residues 918 to 1026 (TSSA…SQTT) and 1115 to 1160 (STGP…STSL). The interval 965 to 975 (GVIDLTMDDEE) is interaction with SUMO. 2 stretches are compositionally biased toward polar residues: residues 988–999 (TPVSTMSSSQPV) and 1016–1026 (GVPTSGPSQTT). A compositionally biased stretch (pro residues) spans 1134-1151 (PRPVHPAPLPEAPQPQRL). Residues 1154 to 1270 (EAASTSLPQK…TDVISSTQSS (117 aa)) form an interaction with MBD1 region. Residues 1160-1270 (LPQKPHLKLA…TDVISSTQSS (111 aa)) form the Fibronectin type-III domain.

Belongs to the MCAF family. Interacts with MBD1; the interaction is enhanced when MBD1 is sumoylated. Interacts with SETDB1; the interaction protects SETDB1 from proteasomal degradation and is required to stimulate histone methyltransferase activity and facilitate the conversion of dimethylated to trimethylated H3 'Lys-9'. Interacts with SUMO ubiquitin-like proteins (SUMO1, SUNO2 and SUMO3), with a preference for SUMO2 and SUMO3. Interacts with SP1, ATF7 and ZHX1. Interacts with the general transcription machinery, including ERCC2, ERCC3, GTF2E1, GTF2E2 and POLR2A. As to quaternary structure, (Microbial infection) Interacts with Epstein-Barr virus BRLF1/Rta protein, leading to the regulation of host genes in Epstein-Barr virus-infected cells. Detected at low levels in breast, lung and stomach; highly up-regulated in the corresponding cancerous tissues (at protein level).

Its subcellular location is the nucleus. Recruiter that couples transcriptional factors to general transcription apparatus and thereby modulates transcription regulation and chromatin formation. Can both act as an activator or a repressor depending on the context. Required for HUSH-mediated heterochromatin formation and gene silencing. Mediates MBD1-dependent transcriptional repression, probably by recruiting complexes containing SETDB1. Stabilizes SETDB1, is required to stimulate histone methyltransferase activity of SETDB1 and facilitates the conversion of dimethylated to trimethylated H3 'Lys-9' (H3K9me3). The complex formed with MBD1 and SETDB1 represses transcription and couples DNA methylation and histone H3 'Lys-9' trimethylation (H3K9me3). Facilitates telomerase TERT and TERC gene expression by SP1 in cancer cells. The sequence is that of Activating transcription factor 7-interacting protein 1 from Homo sapiens (Human).